The sequence spans 58 residues: UPF0391 membrane protein Sbal195_1447 (58 aa).

2 helical membrane-spanning segments follow: residues 6–26 (LVFLVVAVIAGLLGFTGIAGA) and 28–48 (AGIAKIIFFVFIVLLVISLLV).

It belongs to the UPF0391 family.

The protein resides in the cell membrane. This Shewanella baltica (strain OS195) protein is UPF0391 membrane protein Sbal195_1447.